Here is a 516-residue protein sequence, read N- to C-terminus: Adenosine deaminase (516 aa).

The first 20 residues, Met-1–Asp-20, serve as a signal peptide directing secretion.

Belongs to the metallo-dependent hydrolases superfamily. Adenosine and AMP deaminases family. ADGF subfamily. Zn(2+) serves as cofactor. Salivary gland (at protein level).

Its subcellular location is the secreted. It catalyses the reaction adenosine + H2O + H(+) = inosine + NH4(+). Its function is as follows. Catalyzes the deamination of adenosine to inosine. The chain is Adenosine deaminase from Phlebotomus duboscqi (Sandfly).